The chain runs to 48 residues: ATP synthase protein 8 (48 aa).

A helical membrane pass occupies residues 13-33 (LTYGFLLLIILLVLFSQFLLP).

Belongs to the ATPase protein 8 family. In terms of assembly, F-type ATPases have 2 components, CF(1) - the catalytic core - and CF(0) - the membrane proton channel.

Its subcellular location is the mitochondrion membrane. Functionally, mitochondrial membrane ATP synthase (F(1)F(0) ATP synthase or Complex V) produces ATP from ADP in the presence of a proton gradient across the membrane which is generated by electron transport complexes of the respiratory chain. F-type ATPases consist of two structural domains, F(1) - containing the extramembraneous catalytic core and F(0) - containing the membrane proton channel, linked together by a central stalk and a peripheral stalk. During catalysis, ATP synthesis in the catalytic domain of F(1) is coupled via a rotary mechanism of the central stalk subunits to proton translocation. Part of the complex F(0) domain. Minor subunit located with subunit a in the membrane. This is ATP synthase protein 8 (ATP8) from Wickerhamomyces canadensis (Yeast).